We begin with the raw amino-acid sequence, 390 residues long: Chorismate synthase (390 aa).

NADP(+) is bound by residues Arg-39 and Arg-45. FMN is bound by residues 132–134, 253–254, Gly-298, 313–317, and Arg-339; these read RSS, NA, and KPIPT.

The protein belongs to the chorismate synthase family. In terms of assembly, homotetramer. FMNH2 is required as a cofactor.

The enzyme catalyses 5-O-(1-carboxyvinyl)-3-phosphoshikimate = chorismate + phosphate. It participates in metabolic intermediate biosynthesis; chorismate biosynthesis; chorismate from D-erythrose 4-phosphate and phosphoenolpyruvate: step 7/7. Functionally, catalyzes the anti-1,4-elimination of the C-3 phosphate and the C-6 proR hydrogen from 5-enolpyruvylshikimate-3-phosphate (EPSP) to yield chorismate, which is the branch point compound that serves as the starting substrate for the three terminal pathways of aromatic amino acid biosynthesis. This reaction introduces a second double bond into the aromatic ring system. The chain is Chorismate synthase from Shouchella clausii (strain KSM-K16) (Alkalihalobacillus clausii).